The sequence spans 592 residues: MRNTHNPNETEASEDAENDTQSESDLSFDHGSSEKLNRASLPKTQNSAIPQSNALNTTPNESTSQIDSSPKIPSAVPHISTPNPSSGASTPNIKRVSDFKFGEILGEGSYSTVLTATENSTKREYAIKVLDKRHIIKEKKEKYVNIEKEALCILSKHPGFIKLFYTFQDAHNLYFVLSLARNGELLDYINKLGRFNEICAQYYAALIVDSIDYMHGRGVIHRDLKPENILLDDNMRTKITDFGSAKILNSSHGSHEEDTHHADKPQAHSRSFVGTARYVSPEVLSDKIAGTASDIWAFGCILFQMLAGKPPFVAGNEYLTFQSILHLSYEIPPDISDVASDLIKKLLVLDPKDRLTVDEIHQHPFFNGIKFDNTLWELPPPRLKPFGHTSVLSLSVPNASNKHENGDLTSPLGVPSMVSASTNAAPSPVGTFNRGTLLPCQSNLEEENKEWSSILQDDEKISKIGTLNVYSMSGINGNDAFRFFSSLFRKRKPRTFILTNFGRYLCVASDGEGRKTVKEEIPIKSVGMRCRMVKNNEHGWVVETPTKSWSFEDPNGPASAWVELLDKASSISLPFGNHSVTSFSRSIARSAV.

Over residues 1–10 (MRNTHNPNET) the composition is skewed to polar residues. A disordered region spans residues 1 to 92 (MRNTHNPNET…NPSSGASTPN (92 aa)). Over residues 11–22 (EASEDAENDTQS) the composition is skewed to acidic residues. Residues 27-37 (SFDHGSSEKLN) show a composition bias toward basic and acidic residues. The span at 42–68 (PKTQNSAIPQSNALNTTPNESTSQIDS) shows a compositional bias: polar residues. Phosphoserine is present on residues Ser-64 and Ser-69. Polar residues predominate over residues 80 to 92 (STPNPSSGASTPN). Positions 99–366 (FKFGEILGEG…VDEIHQHPFF (268 aa)) constitute a Protein kinase domain. ATP is bound by residues 109-111 (SYS) and Lys-128. A PIF-pocket region spans residues 130-175 (LDKRHIIKEKKEKYVNIEKEALCILSKHPGFIKLFYTFQDAHNLYF). ATP contacts are provided by residues 178 to 180 (SLA) and Glu-184. The Proton acceptor role is filled by Asp-223. Glu-227 and Asp-241 together coordinate ATP. The 112-residue stretch at 461 to 572 (ISKIGTLNVY…ELLDKASSIS (112 aa)) folds into the PH domain.

Belongs to the protein kinase superfamily. AGC Ser/Thr protein kinase family. PDPK1 subfamily.

The protein resides in the cytoplasm. The catalysed reaction is L-seryl-[protein] + ATP = O-phospho-L-seryl-[protein] + ADP + H(+). The enzyme catalyses L-threonyl-[protein] + ATP = O-phospho-L-threonyl-[protein] + ADP + H(+). In terms of biological role, involved in the control of sexual development and cell growth under stressed conditions. Phosphorylates AGC kinase gad8 at 'Thr-387', activating gad8 kinase activity and promoting sexual development. Phosphorylates AGC kinase psk1 at 'Ser-248', activating psk1 kinase activity and promoting phosphorylation of ribosomal protein S6. The sequence is that of Serine/threonine-protein kinase ksg1 from Schizosaccharomyces pombe (strain 972 / ATCC 24843) (Fission yeast).